We begin with the raw amino-acid sequence, 293 residues long: Ribosomal protein L11 methyltransferase (293 aa).

S-adenosyl-L-methionine-binding residues include Thr145, Gly166, Asp188, and Asn229.

Belongs to the methyltransferase superfamily. PrmA family.

The protein localises to the cytoplasm. It carries out the reaction L-lysyl-[protein] + 3 S-adenosyl-L-methionine = N(6),N(6),N(6)-trimethyl-L-lysyl-[protein] + 3 S-adenosyl-L-homocysteine + 3 H(+). Its function is as follows. Methylates ribosomal protein L11. The sequence is that of Ribosomal protein L11 methyltransferase from Halorhodospira halophila (strain DSM 244 / SL1) (Ectothiorhodospira halophila (strain DSM 244 / SL1)).